We begin with the raw amino-acid sequence, 285 residues long: Short chain dehydrogenase sol3 (285 aa).

NADP(+) contacts are provided by L39, K64, and D87. Residues S168 and Y200 each act as proton donor in the active site. The NADP(+) site is built by Y200, K204, and S234. The active-site Lowers pKa of active site Tyr is K204.

It belongs to the short-chain dehydrogenases/reductases (SDR) family.

The protein operates within phytotoxin biosynthesis. In terms of biological role, short chain dehydrogenase; part of the gene cluster that mediates the biosynthesis of the phytotoxin solanapyrone, a causal agent of early blight disease of potato and tomato. The prosolanapyrone synthase sol1 is a polyketide synthase that produces the octaketide desmethylprosolanapyrone I via sequential condensations of 7 malonyl-CoA units with one acetyl-CoA unit, and one methylation step. The octaketide backbone is further methylated by the sol2 O-methyltransferase to yield prosolanapyrone I. Prosolanapyrone I is hydroxylated to prosolanapyrone II by the cytochrome P450 monooxygenase sol6. The solanapyrone synthase sol5 then catalyzes the oxidation of prosolanapyrone II and the subsequent Diels Alder cycloisomerization of the product prosolanapyrone III to solanapyrones A and D. Solanapyrones A and D are then converted into solanapyrones B and E, respectively, by the sol3 dehydrogenase. The polypeptide is Short chain dehydrogenase sol3 (sol3) (Alternaria solani).